Consider the following 254-residue polypeptide: 4-hydroxy-tetrahydrodipicolinate reductase (254 aa).

Residues 10-15 and 101-103 contribute to the NAD(+) site; these read GATGKV and GTT. Histidine 157 serves as the catalytic Proton donor/acceptor. Position 158 (histidine 158) interacts with (S)-2,3,4,5-tetrahydrodipicolinate. Lysine 161 (proton donor) is an active-site residue. 167–168 serves as a coordination point for (S)-2,3,4,5-tetrahydrodipicolinate; the sequence is GT.

Belongs to the DapB family.

Its subcellular location is the cytoplasm. It catalyses the reaction (S)-2,3,4,5-tetrahydrodipicolinate + NAD(+) + H2O = (2S,4S)-4-hydroxy-2,3,4,5-tetrahydrodipicolinate + NADH + H(+). The catalysed reaction is (S)-2,3,4,5-tetrahydrodipicolinate + NADP(+) + H2O = (2S,4S)-4-hydroxy-2,3,4,5-tetrahydrodipicolinate + NADPH + H(+). It functions in the pathway amino-acid biosynthesis; L-lysine biosynthesis via DAP pathway; (S)-tetrahydrodipicolinate from L-aspartate: step 4/4. In terms of biological role, catalyzes the conversion of 4-hydroxy-tetrahydrodipicolinate (HTPA) to tetrahydrodipicolinate. This is 4-hydroxy-tetrahydrodipicolinate reductase from Symbiobacterium thermophilum (strain DSM 24528 / JCM 14929 / IAM 14863 / T).